We begin with the raw amino-acid sequence, 291 residues long: MACLSPSQLQKFQEDGFLVLEGFLSADECEAMQRRIDEIVAKMDVPLHCRTEFSTQEEEQLRAQGSTDYFLSSGDKIRFFFEKGVFDKQGNFLVPPEKSINKIGHALHALDPIFRCVTHSHKVQALARSLGLQMPVVVQSMYIFKQPHFGGEVAPHQDASFLYTEPLGRVLGLWIALEDAMLENGCLWFIPGSHTGGVSRRMVRTPAGSVPGTSFLGSEPIRDNSLFVPTPVLRGALVLIHGEVVHKSEQNLSDRSRQAYTFHLMEAAGTIWSPDNWLQPTPELPFPPLYT.

Phosphothreonine is present on threonine 55. 2-oxoglutarate is bound by residues lysine 102, methionine 141, 156-158, and tryptophan 174; that span reads HQD. The Fe cation site is built by histidine 156 and aspartate 158. Histidine 246 contributes to the Fe cation binding site. Residues serine 248 and arginine 257 each coordinate 2-oxoglutarate.

Belongs to the PhyH family. PHYHD1 subfamily. The cofactor is Fe cation.

2-oxoglutarate(2OG)-dependent dioxygenase that catalyzes the conversion of 2-oxoglutarate to succinate and CO(2) in an iron-dependent manner. However, does not couple 2OG turnover to the hydroxylation of acyl-coenzyme A derivatives, implying that it is not directly involved in phytanoyl coenzyme-A metabolism. Does not show detectable activity towards fatty acid CoA thioesters. The chain is Phytanoyl-CoA dioxygenase domain-containing protein 1 (PHYHD1) from Bos taurus (Bovine).